The primary structure comprises 495 residues: Trigger factor (495 aa).

Residues 169-254 (GDRVAMDYVG…VKDVAAPGAV (86 aa)) form the PPIase FKBP-type domain. The interval 441–495 (LAEDEGEAKAETKKAAPKKKAAAKTEAAEAGEGEEAAAPKKKAAPKKKAADESAE) is disordered.

This sequence belongs to the FKBP-type PPIase family. Tig subfamily.

The protein localises to the cytoplasm. The enzyme catalyses [protein]-peptidylproline (omega=180) = [protein]-peptidylproline (omega=0). Its function is as follows. Involved in protein export. Acts as a chaperone by maintaining the newly synthesized protein in an open conformation. Functions as a peptidyl-prolyl cis-trans isomerase. The sequence is that of Trigger factor from Rhizobium etli (strain CIAT 652).